A 383-amino-acid chain; its full sequence is MKNVLPPFIEIYRALIATPSISATEESLDQSNASLITLLAGWFSDLGFNVEVQPVPGTRNKFNMLASTGHGAGGLLLTGHTDTVPFDDGRWTRDPFTLTEHDNKLYGLGTADMKGFFAFILDALRDVDVTKLKKPLYILATADEETSMAGARYFSETTALRPDCAIIGEPTSLQPIRAHKGHISNVVRVLGQSGHSSDPARGVNAIELMHDAIGHIMQLRDSLKARYHYEAFTVPYPTLNLGHIHGGDASNRICACCELHMDIRPLPGMTLNDLNGLLNDALAPVSERWPGRLTVAELHPPIPGYECPPDHQLVEVVEKLLGTKTDVVNYCTEAPFMQTLCPTLVLGPCSINQAHQPDEYLETRFIKPTRELITQVVHHFCWH.

His-80 is a Zn(2+) binding site. Asp-82 is an active-site residue. Zn(2+) is bound at residue Asp-112. Glu-144 is an active-site residue. Zn(2+) contacts are provided by Glu-145, Glu-169, and His-355.

The protein belongs to the peptidase M20A family. ArgE subfamily. As to quaternary structure, homodimer. Zn(2+) is required as a cofactor. The cofactor is Co(2+). Glutathione serves as cofactor.

It localises to the cytoplasm. The catalysed reaction is N(2)-acetyl-L-ornithine + H2O = L-ornithine + acetate. Its pathway is amino-acid biosynthesis; L-arginine biosynthesis; L-ornithine from N(2)-acetyl-L-ornithine (linear): step 1/1. Catalyzes the hydrolysis of the amide bond of N(2)-acetylated L-amino acids. Cleaves the acetyl group from N-acetyl-L-ornithine to form L-ornithine, an intermediate in L-arginine biosynthesis pathway, and a branchpoint in the synthesis of polyamines. This chain is Acetylornithine deacetylase, found in Salmonella typhi.